Consider the following 519-residue polypeptide: Xylose import ATP-binding protein XylG (519 aa).

ABC transporter domains lie at 6–245 and 262–507; these read LTMR…VGRE and LDVR…LKPA. 38–45 lines the ATP pocket; that stretch reads GENGAGKS.

This sequence belongs to the ABC transporter superfamily. Xylose importer (TC 3.A.1.2.4) family. The complex is composed of two ATP-binding proteins (XylG), two transmembrane proteins (XylH) and a solute-binding protein (XylF).

The protein resides in the cell inner membrane. It carries out the reaction D-xylose(out) + ATP + H2O = D-xylose(in) + ADP + phosphate + H(+). Part of the ABC transporter complex XylFGH involved in xylose import. Responsible for energy coupling to the transport system. This chain is Xylose import ATP-binding protein XylG, found in Burkholderia cenocepacia (strain HI2424).